We begin with the raw amino-acid sequence, 619 residues long: tRNA (guanine(37)-N(1))-methyltransferase 2 (619 aa).

A mitochondrion-targeting transit peptide spans 1–10 (MVSKLSLFRA). S-adenosyl-L-methionine contacts are provided by residues arginine 434, 472 to 473 (DL), 500 to 501 (DG), and asparagine 523.

This sequence belongs to the class I-like SAM-binding methyltransferase superfamily. TRM5/TYW2 family. As to quaternary structure, monomer.

The protein resides in the mitochondrion matrix. Its subcellular location is the nucleus. It localises to the cytoplasm. The enzyme catalyses guanosine(37) in tRNA + S-adenosyl-L-methionine = N(1)-methylguanosine(37) in tRNA + S-adenosyl-L-homocysteine + H(+). Its function is as follows. Specifically methylates the N1 position of guanosine-37 in various cytoplasmic and mitochondrial tRNAs. Methylation is not dependent on the nature of the nucleoside 5' of the target nucleoside. This is the first step in the biosynthesis of wybutosine (yW), a modified base adjacent to the anticodon of tRNAs and required for accurate decoding. The sequence is that of tRNA (guanine(37)-N(1))-methyltransferase 2 from Arabidopsis thaliana (Mouse-ear cress).